A 677-amino-acid chain; its full sequence is Methionine--tRNA ligase (677 aa).

A 'HIGH' region motif is present at residues 15–25 (PYANGSIHLGH). Cys-146, Cys-149, Cys-159, and Cys-162 together coordinate Zn(2+). A 'KMSKS' region motif is present at residues 333–337 (KMSKS). Lys-336 serves as a coordination point for ATP. The tRNA-binding domain occupies 575–677 (DFAKIDLRVA…SGAKPGQQVK (103 aa)).

It belongs to the class-I aminoacyl-tRNA synthetase family. MetG type 1 subfamily. As to quaternary structure, homodimer. Zn(2+) serves as cofactor.

It is found in the cytoplasm. It catalyses the reaction tRNA(Met) + L-methionine + ATP = L-methionyl-tRNA(Met) + AMP + diphosphate. Functionally, is required not only for elongation of protein synthesis but also for the initiation of all mRNA translation through initiator tRNA(fMet) aminoacylation. The polypeptide is Methionine--tRNA ligase (Cronobacter sakazakii (strain ATCC BAA-894) (Enterobacter sakazakii)).